We begin with the raw amino-acid sequence, 140 residues long: Large ribosomal subunit protein bL17 (140 aa).

A disordered region spans residues 120–140; that stretch reads EDAKGQDSGPVMVDEDDFAEA.

Belongs to the bacterial ribosomal protein bL17 family. In terms of assembly, part of the 50S ribosomal subunit. Contacts protein L32.

The chain is Large ribosomal subunit protein bL17 from Erythrobacter litoralis (strain HTCC2594).